The sequence spans 533 residues: Beta-glucosidase 24 (533 aa).

The first 26 residues, 1–26 (MVLQKLPLMSIGLLWLLIIVGPLVNA), serve as a signal peptide directing secretion. Gln-58 is a binding site for a beta-D-glucoside. Residues Asn-64 and Asn-88 are each glycosylated (N-linked (GlcNAc...) asparagine). A beta-D-glucoside-binding positions include His-161 and 206–207 (NE). The active-site Proton donor is the Glu-207. An intrachain disulfide couples Cys-226 to Cys-239. Tyr-355 provides a ligand contact to a beta-D-glucoside. The N-linked (GlcNAc...) asparagine glycan is linked to Asn-388. Glu-427 contributes to the a beta-D-glucoside binding site. Glu-427 (nucleophile) is an active-site residue. 3 N-linked (GlcNAc...) asparagine glycosylation sites follow: Asn-437, Asn-442, and Asn-470. A beta-D-glucoside-binding positions include Trp-477, 484–485 (EW), and Phe-493. An N-linked (GlcNAc...) asparagine glycan is attached at Asn-503. The Prevents secretion from ER motif lies at 530–533 (KDEL).

This sequence belongs to the glycosyl hydrolase 1 family.

It localises to the endoplasmic reticulum lumen. The enzyme catalyses Hydrolysis of terminal, non-reducing beta-D-glucosyl residues with release of beta-D-glucose.. The polypeptide is Beta-glucosidase 24 (Arabidopsis thaliana (Mouse-ear cress)).